Consider the following 276-residue polypeptide: Dermonecrotic toxin LlSicTox-alphaIV2iii (276 aa).

Histidine 5 is an active-site residue. Residues glutamate 25 and aspartate 27 each contribute to the Mg(2+) site. Residue histidine 41 is the Nucleophile of the active site. 2 cysteine pairs are disulfide-bonded: cysteine 45-cysteine 51 and cysteine 47-cysteine 193. Aspartate 85 is a binding site for Mg(2+).

It belongs to the arthropod phospholipase D family. Class II subfamily. It depends on Mg(2+) as a cofactor. In terms of tissue distribution, expressed by the venom gland.

It is found in the secreted. The enzyme catalyses an N-(acyl)-sphingosylphosphocholine = an N-(acyl)-sphingosyl-1,3-cyclic phosphate + choline. The catalysed reaction is an N-(acyl)-sphingosylphosphoethanolamine = an N-(acyl)-sphingosyl-1,3-cyclic phosphate + ethanolamine. It carries out the reaction a 1-acyl-sn-glycero-3-phosphocholine = a 1-acyl-sn-glycero-2,3-cyclic phosphate + choline. It catalyses the reaction a 1-acyl-sn-glycero-3-phosphoethanolamine = a 1-acyl-sn-glycero-2,3-cyclic phosphate + ethanolamine. Its function is as follows. Dermonecrotic toxins cleave the phosphodiester linkage between the phosphate and headgroup of certain phospholipids (sphingolipid and lysolipid substrates), forming an alcohol (often choline) and a cyclic phosphate. This toxin acts on sphingomyelin (SM). It may also act on ceramide phosphoethanolamine (CPE), lysophosphatidylcholine (LPC) and lysophosphatidylethanolamine (LPE), but not on lysophosphatidylserine (LPS), and lysophosphatidylglycerol (LPG). It acts by transphosphatidylation, releasing exclusively cyclic phosphate products as second products. Induces dermonecrosis, hemolysis, increased vascular permeability, edema, inflammatory response, and platelet aggregation. This is Dermonecrotic toxin LlSicTox-alphaIV2iii from Loxosceles laeta (South American recluse spider).